The following is a 187-amino-acid chain: Chromophore lyase CpcS/CpeS 2 (187 aa).

Belongs to the CpcS/CpeS biliprotein lyase family.

Its function is as follows. Covalently attaches a chromophore to Cys residue(s) of phycobiliproteins. The protein is Chromophore lyase CpcS/CpeS 2 of Synechococcus sp. (strain JA-3-3Ab) (Cyanobacteria bacterium Yellowstone A-Prime).